The chain runs to 159 residues: Probable deoxyuridine 5'-triphosphate nucleotidohydrolase (159 aa).

The protein belongs to the dCTP deaminase family. Archaeal dUTPase subfamily.

The enzyme catalyses dUTP + H2O = dUMP + diphosphate + H(+). The protein operates within pyrimidine metabolism; dUMP biosynthesis; dUMP from dCTP (dUTP route): step 2/2. This enzyme is involved in nucleotide metabolism: it produces dUMP, the immediate precursor of thymidine nucleotides and it decreases the intracellular concentration of dUTP so that uracil cannot be incorporated into DNA. The protein is Probable deoxyuridine 5'-triphosphate nucleotidohydrolase of Aeropyrum pernix (strain ATCC 700893 / DSM 11879 / JCM 9820 / NBRC 100138 / K1).